The chain runs to 203 residues: MPIGTPSVPYRLPGSQYERWVDIYTRLGVERILFLGQEVNDGIANSLVAQMLYLDSDDNSKPIYLYINSPGGSVTAGLAIYDTIKYVKSDVVTICVGLAASMGAFLLAAGTKGKRVALPHSRIMIHQPLGGTSQRQASDIEIEAKEILRIKDMLNMSMADMTGQSFEKIEKDTDRDYFLSAEEAKNYGLIDRVITHPSEANQS.

Serine 101 (nucleophile) is an active-site residue. Residue histidine 126 is part of the active site.

It belongs to the peptidase S14 family. As to quaternary structure, fourteen ClpP subunits assemble into 2 heptameric rings which stack back to back to give a disk-like structure with a central cavity, resembling the structure of eukaryotic proteasomes.

Its subcellular location is the cytoplasm. The catalysed reaction is Hydrolysis of proteins to small peptides in the presence of ATP and magnesium. alpha-casein is the usual test substrate. In the absence of ATP, only oligopeptides shorter than five residues are hydrolyzed (such as succinyl-Leu-Tyr-|-NHMec, and Leu-Tyr-Leu-|-Tyr-Trp, in which cleavage of the -Tyr-|-Leu- and -Tyr-|-Trp bonds also occurs).. Functionally, cleaves peptides in various proteins in a process that requires ATP hydrolysis. Has a chymotrypsin-like activity. Plays a major role in the degradation of misfolded proteins. The polypeptide is ATP-dependent Clp protease proteolytic subunit 2 (Prochlorococcus marinus (strain MIT 9312)).